A 132-amino-acid chain; its full sequence is Insulin-like 3 (132 aa).

Positions 1–24 (MSPRPLAWALVLLGAALAVALALG) are cleaved as a signal peptide. 3 disulfides stabilise this stretch: Cys36–Cys117, Cys48–Cys130, and Cys116–Cys121. A propeptide spans 61 to 104 (VAGGDRELLQWLEGRHLHGQVSDGDPMLVLVPQALPQASLHHHH) (c peptide like).

Belongs to the insulin family. Heterodimer of a B chain and an A chain linked by two disulfide bonds. More strongly expressed in testis than in ovary.

The protein localises to the secreted. Its function is as follows. Seems to play a role in testicular function. May be a trophic hormone with a role in testicular descent in fetal life. Is a ligand for LGR8 receptor. The chain is Insulin-like 3 (INSL3) from Canis lupus familiaris (Dog).